The chain runs to 476 residues: CBL-interacting protein kinase 30 (476 aa).

In terms of domain architecture, Protein kinase spans 17–272; sequence YKLGRLLGRG…ISKIMDRPWF (256 aa). ATP-binding positions include 23–31 and Lys46; that span reads LGRGTFAKV. The active-site Proton acceptor is the Asp140. The segment at 158 to 187 is activation loop; it reads DFGLSALDGGLRGDGLLHTTCGTPAYVAPE. The tract at residues 296–315 is disordered; the sequence is KEASQQHDDEEDDGFAREKK. In terms of domain architecture, NAF spans 299-353; that stretch reads SQQHDDEEDDGFAREKKKRSNVIMSSPVIDVRPSSMNAFDIISRSRGLDLSKMFD. The segment at 358–387 is PPI; the sequence is RSEARFSTRETTTAIVSKLEEIAEAGRFSF.

It belongs to the protein kinase superfamily. CAMK Ser/Thr protein kinase family. SNF1 subfamily. It depends on Mn(2+) as a cofactor.

It carries out the reaction L-seryl-[protein] + ATP = O-phospho-L-seryl-[protein] + ADP + H(+). The catalysed reaction is L-threonyl-[protein] + ATP = O-phospho-L-threonyl-[protein] + ADP + H(+). In terms of biological role, CIPK serine-threonine protein kinases interact with CBL proteins. Binding of a CBL protein to the regulatory NAF domain of CIPK protein lead to the activation of the kinase in a calcium-dependent manner. The polypeptide is CBL-interacting protein kinase 30 (CIPK30) (Oryza sativa subsp. japonica (Rice)).